The sequence spans 185 residues: Elongation factor P (185 aa).

This sequence belongs to the elongation factor P family.

The protein resides in the cytoplasm. It functions in the pathway protein biosynthesis; polypeptide chain elongation. Its function is as follows. Involved in peptide bond synthesis. Stimulates efficient translation and peptide-bond synthesis on native or reconstituted 70S ribosomes in vitro. Probably functions indirectly by altering the affinity of the ribosome for aminoacyl-tRNA, thus increasing their reactivity as acceptors for peptidyl transferase. The chain is Elongation factor P from Nitrosomonas europaea (strain ATCC 19718 / CIP 103999 / KCTC 2705 / NBRC 14298).